The chain runs to 121 residues: Protein TCL1B5 (121 aa).

Belongs to the TCL1 family.

The protein is Protein TCL1B5 (Tcl1b5) of Mus musculus (Mouse).